A 101-amino-acid polypeptide reads, in one-letter code: Protein PIP-1 (101 aa).

A signal peptide spans 1 to 23; the sequence is MGKCLLLPLLLVVLSSLLGFPQA. One can recognise a UPAR/Ly6 domain in the interval 24 to 101; it reads LECFQCQRVS…CHDSPFCNKF (78 aa). Cystine bridges form between cysteine 26/cysteine 53, cysteine 29/cysteine 38, cysteine 45/cysteine 71, cysteine 75/cysteine 91, and cysteine 92/cysteine 98. N-linked (GlcNAc...) asparagine glycosylation is present at asparagine 84.

The protein localises to the secreted. The sequence is that of Protein PIP-1 from Sus scrofa (Pig).